Reading from the N-terminus, the 363-residue chain is GTPase Obg (363 aa).

Residues 1–159 (MKFLDEAKVY…KTIWLRLKLI (159 aa)) form the Obg domain. In terms of domain architecture, OBG-type G spans 160–327 (ADAGLVGLPN…VLRALRDIIV (168 aa)). GTP contacts are provided by residues 166–173 (GLPNAGKS), 191–195 (FTTLH), 212–215 (DIPG), 279–282 (SQID), and 308–310 (SAV). S173 and T193 together coordinate Mg(2+). The segment at 332–363 (EEKPAKAPKLRHRDMIVSEENNQGEDGADDQP) is disordered. Residues 353 to 363 (NQGEDGADDQP) show a composition bias toward acidic residues.

Belongs to the TRAFAC class OBG-HflX-like GTPase superfamily. OBG GTPase family. As to quaternary structure, monomer. Mg(2+) serves as cofactor.

The protein resides in the cytoplasm. Functionally, an essential GTPase which binds GTP, GDP and possibly (p)ppGpp with moderate affinity, with high nucleotide exchange rates and a fairly low GTP hydrolysis rate. Plays a role in control of the cell cycle, stress response, ribosome biogenesis and in those bacteria that undergo differentiation, in morphogenesis control. The chain is GTPase Obg from Rhizobium etli (strain ATCC 51251 / DSM 11541 / JCM 21823 / NBRC 15573 / CFN 42).